The sequence spans 674 residues: L-type lectin-domain containing receptor kinase IV.3 (674 aa).

Residues 1–22 (MFFKLFTIFFFFIILLSKPLNS) form the signal peptide. N-linked (GlcNAc...) asparagine glycans are attached at residues asparagine 21, asparagine 28, asparagine 40, asparagine 81, asparagine 136, and asparagine 188. The Extracellular segment spans residues 23–296 (SSQSLNFTYN…TSLQRFYKNR (274 aa)). The legume-lectin like stretch occupies residues 26-263 (SLNFTYNSFH…SEHFVFGWSF (238 aa)). Residues 297–317 (MPLFSLLLIPVLFVVSLIFLV) traverse the membrane as a helical segment. Residues 318 to 674 (RFIVRRRRKF…IAYSIVSGGR (357 aa)) are Cytoplasmic-facing. Residues 355-632 (FKDKDLLGSG…LQYLRGDATL (278 aa)) enclose the Protein kinase domain. ATP is bound by residues 361-369 (LGSGGFGRV) and lysine 384. Catalysis depends on aspartate 480, which acts as the Proton acceptor.

It in the C-terminal section; belongs to the protein kinase superfamily. Ser/Thr protein kinase family. This sequence in the N-terminal section; belongs to the leguminous lectin family.

It localises to the cell membrane. It catalyses the reaction L-seryl-[protein] + ATP = O-phospho-L-seryl-[protein] + ADP + H(+). It carries out the reaction L-threonyl-[protein] + ATP = O-phospho-L-threonyl-[protein] + ADP + H(+). The polypeptide is L-type lectin-domain containing receptor kinase IV.3 (LECRK43) (Arabidopsis thaliana (Mouse-ear cress)).